The chain runs to 451 residues: Zinc metalloproteinase nas-16 (451 aa).

Positions 70–273 constitute a Peptidase M12A domain; the sequence is QVVTKLFSPQ…LTINTAYNCK (204 aa). Intrachain disulfides connect Cys-127–Cys-272, Cys-148–Cys-167, Cys-274–Cys-291, and Cys-296–Cys-305. A glycan (N-linked (GlcNAc...) asparagine) is linked at Asn-133. A Zn(2+)-binding site is contributed by His-175. Glu-176 is a catalytic residue. Zn(2+)-binding residues include His-179 and His-185. Positions 267–306 constitute an EGF-like domain; sequence NTAYNCKCPSELLCANGGYTNPSNCLECICPLGYGGVLCD. N-linked (GlcNAc...) asparagine glycosylation is found at Asn-363 and Asn-438.

Zn(2+) is required as a cofactor.

It localises to the secreted. In terms of biological role, metalloprotease. The protein is Zinc metalloproteinase nas-16 (nas-16) of Caenorhabditis elegans.